The primary structure comprises 504 residues: L-carnitine/gamma-butyrobetaine antiporter (504 aa).

12 consecutive transmembrane segments (helical) span residues 10–30 (IEPK…WLTV), 51–71 (WGWA…WLVF), 92–112 (IFMM…SIEI), 143–163 (GPLP…FFFV), 195–215 (FYLV…TPLV), 231–251 (LDAI…ACGL), 263–283 (SYLS…SFIM), 316–336 (WTVF…IFLA), 347–367 (LCFG…TVLG), 398–418 (WAAL…CFIA), 446–466 (LLVR…LLAL), and 475–495 (AIIA…LSFI).

Belongs to the BCCT transporter (TC 2.A.15) family. CaiT subfamily. In terms of assembly, homotrimer.

Its subcellular location is the cell inner membrane. The catalysed reaction is 4-(trimethylamino)butanoate(in) + (R)-carnitine(out) = 4-(trimethylamino)butanoate(out) + (R)-carnitine(in). Its pathway is amine and polyamine metabolism; carnitine metabolism. Its function is as follows. Catalyzes the exchange of L-carnitine for gamma-butyrobetaine. The chain is L-carnitine/gamma-butyrobetaine antiporter from Escherichia coli (strain ATCC 8739 / DSM 1576 / NBRC 3972 / NCIMB 8545 / WDCM 00012 / Crooks).